A 248-amino-acid chain; its full sequence is 4-hydroxy-tetrahydrodipicolinate reductase (248 aa).

Residue D28 participates in NAD(+) binding. Position 29 (K29) interacts with NADP(+). Residues 78–80 and 102–105 contribute to the NAD(+) site; these read ATT and SYNM. H134 functions as the Proton donor/acceptor in the catalytic mechanism. Residue H135 participates in (S)-2,3,4,5-tetrahydrodipicolinate binding. Catalysis depends on K138, which acts as the Proton donor. 144–145 is a (S)-2,3,4,5-tetrahydrodipicolinate binding site; it reads GT.

This sequence belongs to the DapB family.

It is found in the cytoplasm. The enzyme catalyses (S)-2,3,4,5-tetrahydrodipicolinate + NAD(+) + H2O = (2S,4S)-4-hydroxy-2,3,4,5-tetrahydrodipicolinate + NADH + H(+). The catalysed reaction is (S)-2,3,4,5-tetrahydrodipicolinate + NADP(+) + H2O = (2S,4S)-4-hydroxy-2,3,4,5-tetrahydrodipicolinate + NADPH + H(+). Its pathway is amino-acid biosynthesis; L-lysine biosynthesis via DAP pathway; (S)-tetrahydrodipicolinate from L-aspartate: step 4/4. Its function is as follows. Catalyzes the conversion of 4-hydroxy-tetrahydrodipicolinate (HTPA) to tetrahydrodipicolinate. In Exiguobacterium sibiricum (strain DSM 17290 / CCUG 55495 / CIP 109462 / JCM 13490 / 255-15), this protein is 4-hydroxy-tetrahydrodipicolinate reductase.